Here is a 157-residue protein sequence, read N- to C-terminus: tRNA (cytidine(34)-2'-O)-methyltransferase (157 aa).

The S-adenosyl-L-methionine site is built by Leu78, Gly100, Ile122, and Ser130.

Belongs to the class IV-like SAM-binding methyltransferase superfamily. RNA methyltransferase TrmH family. TrmL subfamily. Homodimer.

It localises to the cytoplasm. The enzyme catalyses cytidine(34) in tRNA + S-adenosyl-L-methionine = 2'-O-methylcytidine(34) in tRNA + S-adenosyl-L-homocysteine + H(+). The catalysed reaction is 5-carboxymethylaminomethyluridine(34) in tRNA(Leu) + S-adenosyl-L-methionine = 5-carboxymethylaminomethyl-2'-O-methyluridine(34) in tRNA(Leu) + S-adenosyl-L-homocysteine + H(+). In terms of biological role, methylates the ribose at the nucleotide 34 wobble position in the two leucyl isoacceptors tRNA(Leu)(CmAA) and tRNA(Leu)(cmnm5UmAA). Catalyzes the methyl transfer from S-adenosyl-L-methionine to the 2'-OH of the wobble nucleotide. The protein is tRNA (cytidine(34)-2'-O)-methyltransferase of Escherichia coli O6:H1 (strain CFT073 / ATCC 700928 / UPEC).